Consider the following 66-residue polypeptide: Large ribosomal subunit protein uL29 (66 aa).

It belongs to the universal ribosomal protein uL29 family.

This is Large ribosomal subunit protein uL29 from Syntrophobacter fumaroxidans (strain DSM 10017 / MPOB).